The sequence spans 472 residues: Major capsid protein (472 aa).

Belongs to the phi29 phage major capsid protein family.

Its subcellular location is the virion. Its function is as follows. Assembles to form a prolate capsid of about 45x54 nm, with a T=3, Q=5 symmetry. The polypeptide is Major capsid protein (8) (Bacillus phage GA-1 (Bacteriophage GA-1)).